The following is a 300-amino-acid chain: Solute carrier family 25 member 35 (300 aa).

3 Solcar repeats span residues methionine 1–arginine 90, histidine 100–leucine 193, and glutamine 203–phenylalanine 294. The next 6 helical transmembrane spans lie at threonine 38 to glycine 58, leucine 59 to isoleucine 79, glycine 91 to leucine 119, alanine 169 to isoleucine 190, tryptophan 205 to proline 225, and leucine 277 to lysine 300.

This sequence belongs to the mitochondrial carrier (TC 2.A.29) family.

It localises to the mitochondrion inner membrane. It catalyses the reaction a dicarboxylate(in) + sulfate(out) = a dicarboxylate(out) + sulfate(in). Its function is as follows. Putative antiporter that exchanges dicarboxylates and sulfur oxoanions across the inner membrane of mitochondria. The chain is Solute carrier family 25 member 35 (Slc25a35) from Mus musculus (Mouse).